We begin with the raw amino-acid sequence, 382 residues long: MSAPESSPSTFYTVPTKHILSKAHLAAFQRSKTHSDIFNFIEELNEDIVGKKLTEAGQGSERTRPLISILDSVREIAESTPPVDNKLSRFGNPAFKTFYDKVGDASLELHKRIPGLPEEAIQEVEVYFKESWGNKQRVDYGSGMELNFLSWLLCLAKLGVVTKEDYPFLVLGVFWRYIEVMRYLQSTYWLEPAGSHGVWGLDDYHFLPFLWGSGQLRNHKYLRPKAIHDPEILGEFSKDYMYLSCIEFINSIKTASLRWHSPMLDDISAVKTWEKVNQGMKKMFVAEVLGKLPVMQHALFGSLLPFPTPEEDPELKRALEEEDGQSATDMHGHIHDPSEKGWSMDCCGIPVPSAFAAAQDANSHKGVPTLGNRPGIKPIPFD.

The tract at residues 363–382 (SHKGVPTLGNRPGIKPIPFD) is disordered.

Belongs to the PTPA-type PPIase family.

It localises to the cytoplasm. It carries out the reaction [protein]-peptidylproline (omega=180) = [protein]-peptidylproline (omega=0). In terms of biological role, PPIases accelerate the folding of proteins. It catalyzes the cis-trans isomerization of proline imidic peptide bonds in oligopeptides. Acts as a regulatory subunit for PP2A-like phosphatases modulating their activity or substrate specificity, probably by inducing a conformational change in the catalytic subunit, a direct target of the PPIase. Can reactivate inactive phosphatase PP2A-phosphatase methylesterase complexes (PP2Ai) in presence of ATP and Mg(2+) by dissociating the inactive form from the complex. This Cryptococcus neoformans var. neoformans serotype D (strain B-3501A) (Filobasidiella neoformans) protein is Serine/threonine-protein phosphatase 2A activator 2 (RRD2).